Consider the following 303-residue polypeptide: Taste receptor type 2 member 13 (303 aa).

The Extracellular segment spans residues 1 to 7 (MESALPS). A helical membrane pass occupies residues 8-28 (IFTLVIIAEFIIGNLSNGFIV). Residues 29 to 55 (LINCIDWVSKRELSSVDKLLIILAISR) are Cytoplasmic-facing. The helical transmembrane segment at 56–76 (IGLIWEILVSWFLALHSLAIF) threads the bilayer. Topologically, residues 77-85 (VSGTGLRIM) are extracellular. The chain crosses the membrane as a helical span at residues 86-106 (IFSWIVSNHFNLWLATILSIF). The Cytoplasmic segment spans residues 107–128 (YLLKIASFSSPAFLYLKRRVNK). Residues 129-149 (VILMILLGTLVFLFLNLIQIN) form a helical membrane-spanning segment. Residues 150 to 184 (MLIKDWLDRYERNTTWNFSMSDFETFSVSVRFTMT) are Extracellular-facing. N-linked (GlcNAc...) asparagine glycans are attached at residues Asn-162 and Asn-166. Residues 185-205 (MFSLTPFTVAFISFLLLVFSL) form a helical membrane-spanning segment. At 206 to 232 (QKHLQKMQLNYKGHRDPRTKVHTNALK) the chain is on the cytoplasmic side. Residues 233–253 (IVISFLLLYASFFLSILISWI) traverse the membrane as a helical segment. Residues 254–261 (SELYQNTV) are Extracellular-facing. The helical transmembrane segment at 262 to 282 (IYMLCETIGAFYPSSHSFLLI) threads the bilayer. Residues 283 to 303 (LGNAKLRQAFLLVAAKVWAKR) are Cytoplasmic-facing.

It belongs to the G-protein coupled receptor T2R family.

It is found in the membrane. Its function is as follows. Receptor that may play a role in the perception of bitterness and is gustducin-linked. May play a role in sensing the chemical composition of the gastrointestinal content. The activity of this receptor may stimulate alpha gustducin, mediate PLC-beta-2 activation and lead to the gating of TRPM5. This Pan troglodytes (Chimpanzee) protein is Taste receptor type 2 member 13 (TAS2R13).